A 699-amino-acid polypeptide reads, in one-letter code: D-(-)-3-hydroxybutyrate oligomer hydrolase (699 aa).

The signal sequence occupies residues 1–33; it reads MTAIRGGSRRAPGLALALLGGVLLGACHGDENA. The Charge relay system role is filled by Ser-311.

It belongs to the D-(-)-3-hydroxybutyrate oligomer hydrolase family.

The protein localises to the secreted. It carries out the reaction (3R)-hydroxybutanoate dimer + H2O = 2 (R)-3-hydroxybutanoate + H(+). It functions in the pathway lipid metabolism; butanoate metabolism. In terms of biological role, participates in the degradation of poly-3-hydroxybutyrate (PHB). It works downstream of poly(3-hydroxybutyrate) depolymerase, hydrolyzing D(-)-3-hydroxybutyrate oligomers of various length (3HB-oligomers) into 3HB-monomers. The polypeptide is D-(-)-3-hydroxybutyrate oligomer hydrolase (Burkholderia pseudomallei (strain 1710b)).